We begin with the raw amino-acid sequence, 329 residues long: MAP kinase-activated protein kinase 2 (329 aa).

ATP contacts are provided by residues Leu1 to Val7 and Lys22. Residues Leu1 to Ile254 enclose the Protein kinase domain. Position 68–70 (Glu68–Leu70) interacts with staurosporine. Asp115 serves as the catalytic Proton acceptor. Thr151 is modified (phosphothreonine; by MAPK14). Ser201 bears the Phosphoserine; by MAPK14 mark. Ser257 is subject to Phosphoserine; by autocatalysis. The interval Ser257 to Arg293 is autoinhibitory helix. The residue at position 263 (Thr263) is a Phosphothreonine; by MAPK14. Residue Lys282 forms a Glycyl lysine isopeptide (Lys-Gly) (interchain with G-Cter in SUMO) linkage. The Nuclear export signal (NES) motif lies at Met285–Val294. Positions Asp295–Ala319 are p38 MAPK-binding site. 2 consecutive short sequence motifs (bipartite nuclear localization signal) follow at residues Lys300 to Lys303 and Lys314 to Lys318.

This sequence belongs to the protein kinase superfamily. CAMK Ser/Thr protein kinase family. As to quaternary structure, heterodimer with p38-alpha/MAPK14; this heterodimer forms a stable complex: molecules are positioned 'face to face' so that the ATP-binding sites of both kinases are at the heterodimer interface. Interacts with PHC2. Interacts with HSF1. Sumoylation inhibits the protein kinase activity. Post-translationally, phosphorylated and activated by MAP kinase p38-alpha/MAPK14 at Thr-151, Ser-201 and Thr-263.

The protein localises to the cytoplasm. It localises to the nucleus. It catalyses the reaction L-seryl-[protein] + ATP = O-phospho-L-seryl-[protein] + ADP + H(+). The catalysed reaction is L-threonyl-[protein] + ATP = O-phospho-L-threonyl-[protein] + ADP + H(+). Its activity is regulated as follows. Activated following phosphorylation by p38-alpha/MAPK14 following various stresses. Inhibited following sumoylation. Specifically inhibited by pyrrolopyridine inhibitors. Stress-activated serine/threonine-protein kinase involved in cytokine production, endocytosis, reorganization of the cytoskeleton, cell migration, cell cycle control, chromatin remodeling, DNA damage response and transcriptional regulation. Following stress, it is phosphorylated and activated by MAP kinase p38-alpha/MAPK14, leading to phosphorylation of substrates. Phosphorylates serine in the peptide sequence, Hyd-X-R-X(2)-S, where Hyd is a large hydrophobic residue. Phosphorylates ALOX5, CDC25B, CDC25C, CEP131, ELAVL1, HNRNPA0, HSP27/HSPB1, KRT18, KRT20, LIMK1, LSP1, PABPC1, PARN, PDE4A, RCSD1, RPS6KA3, TAB3 and TTP/ZFP36. Phosphorylates HSF1; leading to the interaction with HSP90 proteins and inhibiting HSF1 homotrimerization, DNA-binding and transactivation activities. Mediates phosphorylation of HSP27/HSPB1 in response to stress, leading to the dissociation of HSP27/HSPB1 from large small heat-shock protein (sHsps) oligomers and impairment of their chaperone activities and ability to protect against oxidative stress effectively. Involved in inflammatory response by regulating tumor necrosis factor (TNF) and IL6 production post-transcriptionally: acts by phosphorylating AU-rich elements (AREs)-binding proteins ELAVL1, HNRNPA0, PABPC1 and TTP/ZFP36, leading to regulation of the stability and translation of TNF and IL6 mRNAs. Phosphorylation of TTP/ZFP36, a major post-transcriptional regulator of TNF, promotes its binding to 14-3-3 proteins and reduces its ARE mRNA affinity, leading to inhibition of dependent degradation of ARE-containing transcripts. Phosphorylates CEP131 in response to cellular stress following ultraviolet irradiation which promotes binding of CEP131 to 14-3-3 proteins and inhibits formation of novel centriolar satellites. Also involved in late G2/M checkpoint following DNA damage through a process of post-transcriptional mRNA stabilization: following DNA damage, relocalizes from nucleus to cytoplasm and phosphorylates HNRNPA0 and PARN, leading to stabilization of GADD45A mRNA. Involved in toll-like receptor signaling pathway (TLR) in dendritic cells: required for acute TLR-induced macropinocytosis by phosphorylating and activating RPS6KA3. This Cricetulus longicaudatus (Long-tailed dwarf hamster) protein is MAP kinase-activated protein kinase 2 (MAPKAPK2).